The sequence spans 414 residues: Putative polyketide beta-ketoacyl synthase 2 (414 aa).

In terms of domain architecture, Ketosynthase family 3 (KS3) spans 4 to 407; it reads PRRAVVTGLG…GNNSALVLRR (404 aa).

This sequence belongs to the thiolase-like superfamily. Beta-ketoacyl-ACP synthases family.

Functionally, involved in developmentally regulated synthesis of a compound biosynthetically related to polyketide antibiotics which is essential for spore color in Streptomyces halstedii. This is Putative polyketide beta-ketoacyl synthase 2 (sch2) from Streptomyces halstedii.